The primary structure comprises 90 residues: Probable Fe(2+)-trafficking protein (90 aa).

The protein belongs to the Fe(2+)-trafficking protein family.

In terms of biological role, could be a mediator in iron transactions between iron acquisition and iron-requiring processes, such as synthesis and/or repair of Fe-S clusters in biosynthetic enzymes. The polypeptide is Probable Fe(2+)-trafficking protein (Cupriavidus taiwanensis (strain DSM 17343 / BCRC 17206 / CCUG 44338 / CIP 107171 / LMG 19424 / R1) (Ralstonia taiwanensis (strain LMG 19424))).